We begin with the raw amino-acid sequence, 523 residues long: UDP-glucuronosyltransferase 3A2 (523 aa).

Residues 1-22 (MAGQRVLLLVGFLLPGVLLSEA) form the signal peptide. Over 23–483 (AKILTISTVG…YVFQQPWHEQ (461 aa)) the chain is Extracellular. Asparagine 52 carries N-linked (GlcNAc...) asparagine glycosylation. A helical transmembrane segment spans residues 484–504 (YLLDVFVFLLGLTLGTLWLCG). The Cytoplasmic segment spans residues 505–523 (KLLGMAVWWLRGARKVKET).

The protein belongs to the UDP-glycosyltransferase family.

The protein resides in the membrane. It carries out the reaction glucuronate acceptor + UDP-alpha-D-glucuronate = acceptor beta-D-glucuronoside + UDP + H(+). In terms of biological role, UDP-glucuronosyltransferases catalyze phase II biotransformation reactions in which lipophilic substrates are conjugated with glucuronic acid to increase water solubility and enhance excretion. They are of major importance in the conjugation and subsequent elimination of potentially toxic xenobiotics and endogenous compounds. The polypeptide is UDP-glucuronosyltransferase 3A2 (UGT3A2) (Homo sapiens (Human)).